Here is a 266-residue protein sequence, read N- to C-terminus: Decarboxylase tropJ (266 aa).

The active-site Proton acceptor is Glu80. The Zn(2+) site is built by Glu80, His99, His101, and His180.

This sequence belongs to the aldolase class II family. Zn(2+) serves as cofactor.

The protein operates within secondary metabolite biosynthesis. Its function is as follows. Decarboxylase; part of the gene cluster that mediates the biosynthesis of the tropolone class of fungal maleic anhydrides. The pathway begins with the synthesis of 3-methylorcinaldehyde by the non-reducing polyketide synthase (PKS) tropA. 3-methylorcinaldehyde is the substrate for the FAD-dependent monooxygenase tropB to yield a dearomatized hydroxycyclohexadione. The 2-oxoglutarate-dependent dioxygenase tropC then performs the oxidative ring expansion to provide the first tropolone metabolite stipitaldehyde. Trop D converts stipitaldehyde into stipitacetal which is in turn converted to stipitalide by the short-chain dehydrogenase/reductase tropE. The next steps involve tropF, tropG, tropH, tropI and tropJ to form successive tropolone maleic anhydrides including stipitaldehydic, stipitatonic and stipitatic acids. The protein is Decarboxylase tropJ of Talaromyces stipitatus (strain ATCC 10500 / CBS 375.48 / QM 6759 / NRRL 1006) (Penicillium stipitatum).